The primary structure comprises 151 residues: Trivalent organoarsenical cleaving enzyme (151 aa).

Positions 2–118 (SRVQLALRVP…GGEPWEVYVV (117 aa)) constitute a VOC domain. Gln5 lines the Fe(2+) pocket. Residue Asp61 coordinates roxarsone (III). Residue His62 participates in Fe(2+) binding. The roxarsone (III) site is built by Cys95 and Cys96. Glu114 lines the Fe(2+) pocket.

In terms of assembly, monomer. Fe(2+) is required as a cofactor.

It catalyses the reaction methylarsonous acid + AH2 + O2 = arsenite + methanol + A + H(+). The catalysed reaction is roxarsone (III) + AH2 + O2 = 4-hydroxy-3-nitrocyclohexa-2,5-dien-1-one + arsenite + A + H(+). The enzyme catalyses nitarsone (III) + AH2 + O2 = 4-nitrocyclohexa-2,5-dien-1-one + arsenite + A + H(+). It carries out the reaction 4-aminophenylarsonous acid + AH2 + O2 = 4-aminocyclohexa-2,5-dien-1-one + arsenite + A. In terms of biological role, nonheme iron-dependent dioxygenase that can break carbon-arsenic bonds, playing a role in the detoxification of environmental organoarsenical compounds. Catalyzes the oxygen-dependent demethylation of highly toxic methylarsonous acid (MAs(III)) to arsenite, which can then be exported out of the cell. Can also cleave the C-As bond in several trivalent aromatic arsenicals, including roxarsone (III), nitarsone (III) and (4-aminophenyl)arsonous acid. Organoarsenical degradation by this enzyme is proposed to have a significant impact on the arsenic biogeocycle that maintains a balance between organic and inorganic species. In Thermomonospora curvata (strain ATCC 19995 / DSM 43183 / JCM 3096 / KCTC 9072 / NBRC 15933 / NCIMB 10081 / Henssen B9), this protein is Trivalent organoarsenical cleaving enzyme.